The primary structure comprises 310 residues: tRNA uridine(34) hydroxylase (310 aa).

The region spanning 124 to 218 (SDPEVLLIDT…YFEEVPQEES (95 aa)) is the Rhodanese domain. The active-site Cysteine persulfide intermediate is Cys-178.

This sequence belongs to the TrhO family.

The catalysed reaction is uridine(34) in tRNA + AH2 + O2 = 5-hydroxyuridine(34) in tRNA + A + H2O. Its function is as follows. Catalyzes oxygen-dependent 5-hydroxyuridine (ho5U) modification at position 34 in tRNAs. The sequence is that of tRNA uridine(34) hydroxylase from Pseudomonas putida (strain GB-1).